We begin with the raw amino-acid sequence, 233 residues long: Purine nucleoside phosphorylase DeoD-type (233 aa).

Residue His-4 participates in a purine D-ribonucleoside binding. Phosphate is bound by residues Gly-20, Arg-24, Arg-43, and 87-90 (RIGT). Residues 179 to 181 (EME) and 203 to 204 (SD) contribute to the a purine D-ribonucleoside site. Asp-204 acts as the Proton donor in catalysis.

The protein belongs to the PNP/UDP phosphorylase family. Homohexamer; trimer of homodimers.

It carries out the reaction a purine D-ribonucleoside + phosphate = a purine nucleobase + alpha-D-ribose 1-phosphate. The enzyme catalyses a purine 2'-deoxy-D-ribonucleoside + phosphate = a purine nucleobase + 2-deoxy-alpha-D-ribose 1-phosphate. Its function is as follows. Catalyzes the reversible phosphorolytic breakdown of the N-glycosidic bond in the beta-(deoxy)ribonucleoside molecules, with the formation of the corresponding free purine bases and pentose-1-phosphate. This is Purine nucleoside phosphorylase DeoD-type from Helicobacter pylori (strain ATCC 700392 / 26695) (Campylobacter pylori).